The chain runs to 347 residues: Protein RecA (347 aa).

67–74 (GPESSGKT) is an ATP binding site.

It belongs to the RecA family.

The protein resides in the cytoplasm. In terms of biological role, can catalyze the hydrolysis of ATP in the presence of single-stranded DNA, the ATP-dependent uptake of single-stranded DNA by duplex DNA, and the ATP-dependent hybridization of homologous single-stranded DNAs. It interacts with LexA causing its activation and leading to its autocatalytic cleavage. The polypeptide is Protein RecA (Helicobacter pylori (strain Shi470)).